A 280-amino-acid polypeptide reads, in one-letter code: Succinate dehydrogenase [ubiquinone] iron-sulfur subunit, mitochondrial (280 aa).

The N-terminal 25 residues, 1–25 (MAAVCFSLSRCCSAVHRPAVTAVRF), are a transit peptide targeting the mitochondrion. In terms of domain architecture, 2Fe-2S ferredoxin-type spans 39 to 129 (KKFQIYRWDP…TSKVTKIYPL (91 aa)). [2Fe-2S] cluster contacts are provided by cysteine 92, cysteine 97, cysteine 100, and cysteine 112. One can recognise a 4Fe-4S ferredoxin-type domain in the interval 175 to 205 (DRQKLDGLYECILCACCSTSCPSYWWNADKY). Cysteine 185, cysteine 188, and cysteine 191 together coordinate [4Fe-4S] cluster. Cysteine 195 contributes to the [3Fe-4S] cluster binding site. Residue tryptophan 200 coordinates a ubiquinone. [3Fe-4S] cluster contacts are provided by cysteine 242 and cysteine 248. Cysteine 252 serves as a coordination point for [4Fe-4S] cluster.

This sequence belongs to the succinate dehydrogenase/fumarate reductase iron-sulfur protein family. Component of complex II composed of four subunits: the flavoprotein (FP) sdha, iron-sulfur protein (IP) sdhb, and a cytochrome b composed of sdhc and sdhd. [2Fe-2S] cluster serves as cofactor. It depends on [3Fe-4S] cluster as a cofactor. [4Fe-4S] cluster is required as a cofactor.

The protein resides in the mitochondrion inner membrane. It carries out the reaction a quinone + succinate = fumarate + a quinol. The catalysed reaction is (R)-malate + a quinone = enol-oxaloacetate + a quinol. It catalyses the reaction (S)-malate + a quinone = enol-oxaloacetate + a quinol. The protein operates within carbohydrate metabolism; tricarboxylic acid cycle; fumarate from succinate (eukaryal route): step 1/1. Its activity is regulated as follows. Enol-oxaloacetate inhibits the succinate dehydrogenase activity. Functionally, iron-sulfur protein (IP) subunit of the succinate dehydrogenase complex (mitochondrial respiratory chain complex II), responsible for transferring electrons from succinate to ubiquinone (coenzyme Q). SDH also oxidizes malate to the non-canonical enol form of oxaloacetate, enol-oxaloacetate. Enol-oxaloacetate, which is a potent inhibitor of the succinate dehydrogenase activity, is further isomerized into keto-oxaloacetate. This Danio rerio (Zebrafish) protein is Succinate dehydrogenase [ubiquinone] iron-sulfur subunit, mitochondrial (sdhb).